The sequence spans 220 residues: Deoxyribose-phosphate aldolase (220 aa).

D92 (proton donor/acceptor) is an active-site residue. Catalysis depends on K155, which acts as the Schiff-base intermediate with acetaldehyde. Catalysis depends on K184, which acts as the Proton donor/acceptor.

This sequence belongs to the DeoC/FbaB aldolase family. DeoC type 1 subfamily.

Its subcellular location is the cytoplasm. It carries out the reaction 2-deoxy-D-ribose 5-phosphate = D-glyceraldehyde 3-phosphate + acetaldehyde. Its pathway is carbohydrate degradation; 2-deoxy-D-ribose 1-phosphate degradation; D-glyceraldehyde 3-phosphate and acetaldehyde from 2-deoxy-alpha-D-ribose 1-phosphate: step 2/2. Catalyzes a reversible aldol reaction between acetaldehyde and D-glyceraldehyde 3-phosphate to generate 2-deoxy-D-ribose 5-phosphate. The polypeptide is Deoxyribose-phosphate aldolase (Symbiobacterium thermophilum (strain DSM 24528 / JCM 14929 / IAM 14863 / T)).